The primary structure comprises 689 residues: Glycine--tRNA ligase beta subunit (689 aa).

Belongs to the class-II aminoacyl-tRNA synthetase family. Tetramer of two alpha and two beta subunits.

The protein localises to the cytoplasm. The catalysed reaction is tRNA(Gly) + glycine + ATP = glycyl-tRNA(Gly) + AMP + diphosphate. This is Glycine--tRNA ligase beta subunit from Salmonella paratyphi C (strain RKS4594).